We begin with the raw amino-acid sequence, 405 residues long: Eukaryotic initiation factor 4A (405 aa).

Residues 31–59 (ECFEALNLEGDLLRGIFAYGFEKPSAIQQ) carry the Q motif motif. The Helicase ATP-binding domain occupies 62 to 232 (IKPILDGYDT…TQFMRDPKRI (171 aa)). 75–82 (AQSGTGKT) provides a ligand contact to ATP. Residues 180–183 (DEAD) carry the DEAD box motif. The Helicase C-terminal domain occupies 243 to 404 (GIRQFYVGVE…EMPMGITDIL (162 aa)).

The protein belongs to the DEAD box helicase family. eIF4A subfamily. As to quaternary structure, eIF4F is a multi-subunit complex, the composition of which varies with external and internal environmental conditions. It is composed of at least EIF4A, EIF4E and EIF4G.

It catalyses the reaction ATP + H2O = ADP + phosphate + H(+). Its function is as follows. ATP-dependent RNA helicase which is a subunit of the eIF4F complex involved in cap recognition and is required for mRNA binding to ribosome. In the current model of translation initiation, eIF4A unwinds RNA secondary structures in the 5'-UTR of mRNAs which is necessary to allow efficient binding of the small ribosomal subunit, and subsequent scanning for the initiator codon. The sequence is that of Eukaryotic initiation factor 4A (EIF4-A) from Cryptosporidium parvum.